The primary structure comprises 484 residues: Solute carrier family 40 member 1 (484 aa).

11 helical membrane-spanning segments follow: residues 58–78, 94–114, 123–143, 189–209, 212–232, 279–299, 308–328, 346–366, 377–397, 413–433, and 442–462; these read LLTAVYGVVEASAVAALGPIV, WLLLQGASFVAAGVSVTALLV, GFPAFVALVVVTNVSGALAAL, VLSGFFISFVSMEASAAALAA, LAAVWVQYWLFVSVYAGFPAL, VVLPGVALAFLYFTVLSFGTL, GIPAYVISLARGVSAAVGIAA, LWSIWAQWCCLLVCVASVWAG, LMGGVAASRLGLWMFDLAVMQ, GVQNSLQSMFDLLTYVMGIIV, and LIVLSFFLVTCAAAMYTMHVY.

Belongs to the ferroportin (FP) (TC 2.A.100) family. SLC40A subfamily.

It localises to the membrane. May be involved in iron transport and iron homeostasis. The sequence is that of Solute carrier family 40 member 1 from Oryza sativa subsp. japonica (Rice).